Consider the following 163-residue polypeptide: Nucleotide-binding protein ECA1137 (163 aa).

This sequence belongs to the YajQ family.

Its function is as follows. Nucleotide-binding protein. This is Nucleotide-binding protein ECA1137 from Pectobacterium atrosepticum (strain SCRI 1043 / ATCC BAA-672) (Erwinia carotovora subsp. atroseptica).